A 420-amino-acid chain; its full sequence is D-tagatose-1,6-bisphosphate aldolase subunit GatZ (420 aa).

It belongs to the GatZ/KbaZ family. GatZ subfamily. As to quaternary structure, forms a complex with GatY.

It participates in carbohydrate metabolism; D-tagatose 6-phosphate degradation; D-glyceraldehyde 3-phosphate and glycerone phosphate from D-tagatose 6-phosphate: step 2/2. In terms of biological role, component of the tagatose-1,6-bisphosphate aldolase GatYZ that is required for full activity and stability of the Y subunit. Could have a chaperone-like function for the proper and stable folding of GatY. When expressed alone, GatZ does not show any aldolase activity. Is involved in the catabolism of galactitol. The protein is D-tagatose-1,6-bisphosphate aldolase subunit GatZ of Escherichia coli O17:K52:H18 (strain UMN026 / ExPEC).